A 332-amino-acid polypeptide reads, in one-letter code: HPr kinase/phosphorylase (332 aa).

Catalysis depends on residues His-153 and Lys-174. 168–175 (GKSGLGKS) is an ATP binding site. A Mg(2+)-binding site is contributed by Ser-175. The active-site Proton acceptor; for phosphorylation activity. Proton donor; for dephosphorylation activity is the Asp-192. The interval 217 to 226 (MEIRGLGVVD) is important for the catalytic mechanism of both phosphorylation and dephosphorylation. Mg(2+) is bound at residue Glu-218. Arg-259 is an active-site residue. An important for the catalytic mechanism of dephosphorylation region spans residues 280 to 285 (PIFPGK).

This sequence belongs to the HPrK/P family. In terms of assembly, homohexamer. It depends on Mg(2+) as a cofactor.

It catalyses the reaction [HPr protein]-L-serine + ATP = [HPr protein]-O-phospho-L-serine + ADP + H(+). The enzyme catalyses [HPr protein]-O-phospho-L-serine + phosphate + H(+) = [HPr protein]-L-serine + diphosphate. Functionally, catalyzes the ATP- as well as the pyrophosphate-dependent phosphorylation of a specific serine residue in HPr, a phosphocarrier protein of the phosphoenolpyruvate-dependent sugar phosphotransferase system (PTS). HprK/P also catalyzes the pyrophosphate-producing, inorganic phosphate-dependent dephosphorylation (phosphorolysis) of seryl-phosphorylated HPr (P-Ser-HPr). The polypeptide is HPr kinase/phosphorylase (Chlorobium phaeovibrioides (strain DSM 265 / 1930) (Prosthecochloris vibrioformis (strain DSM 265))).